Reading from the N-terminus, the 233-residue chain is Protein DOUBLE-STRAND BREAK FORMATION (233 aa).

Interacts with PRD1; this interaction facilitates a binding to PRD3. Specifically expressed in buds.

In terms of biological role, required for meiotic double-strand break (DSB) formation, the initial event for meiotic recombination. The polypeptide is Protein DOUBLE-STRAND BREAK FORMATION (Arabidopsis thaliana (Mouse-ear cress)).